Here is a 454-residue protein sequence, read N- to C-terminus: MAYDVIVKGAKAVRKGGTERADIAVKDGKIALIGPGIDENAEQVVQADGMYVFPGAVDCHVHFNEPGREEWEGIETGSNMLAAGGCTSYFDMPLNCIPSTVTAENLLAKAEIAERKSAVDFALWGGLMPGYTEHIRPMAEAGAIGFKAFLSKSGTDEFQSADERTLLKGMKEIAACGKVLALHAESDALTRFLEAEYALQGKIDVRAYASSRPEEAECEAVQRAIEYARATGCALHFVHISTKRAVLSIQQAKKDGLDVTVETCPHYLLFSFEDFLKKGAAAKCAPPLRSEADKEELIGVLAEGLIDMVSSDHSPCHPSLKREDNMFLSWGGISGGQFTLLGMIQLAIDHGIPFEHVARWTAEAPAKRFGLTNKGRLEEGFDADFAIVRPEPFTVTKETMFSKHKQSLYEGHTFPYRIAATYSKGRCVYQDGGRKQSGAFGTFLKPSEIKEPIL.

Zn(2+)-binding residues include His60, His62, Lys147, His183, His239, and Asp312. Lys147 bears the N6-carboxylysine mark.

This sequence belongs to the metallo-dependent hydrolases superfamily. Allantoinase family. Homotetramer. It depends on Zn(2+) as a cofactor. In terms of processing, carboxylation allows a single lysine to coordinate two zinc ions.

It carries out the reaction (S)-allantoin + H2O = allantoate + H(+). Its pathway is nitrogen metabolism; (S)-allantoin degradation; allantoate from (S)-allantoin: step 1/1. Functionally, catalyzes the conversion of allantoin (5-ureidohydantoin) to allantoic acid by hydrolytic cleavage of the five-member hydantoin ring. This Bacillus velezensis (strain DSM 23117 / BGSC 10A6 / LMG 26770 / FZB42) (Bacillus amyloliquefaciens subsp. plantarum) protein is Allantoinase.